The primary structure comprises 349 residues: Core protein VP7 (349 aa).

N-linked (GlcNAc...) asparagine; by host glycosylation is present at N45.

The protein belongs to the orbivirus VP7 family. Homotrimer.

The protein resides in the virion. Functionally, major structural core protein; binds to structural protein VP3. Constitutes the surface of the AHSV core. This chain is Core protein VP7 (Segment-7), found in African horse sickness virus 6 (AHSV-6).